The primary structure comprises 729 residues: E3 ubiquitin-protein ligase Trim36 (729 aa).

Residues 33–84 form an RING-type; degenerate zinc finger; sequence CPACKELFTHPLILPCQHSVCHKCVKELLLSLDDSFNDVASDSSNQSSPRLR. B box-type zinc fingers lie at residues 154–192 and 207–249; these read AIMC…WGTV and PKVL…VTTM. The Zn(2+) site is built by Cys-212, His-215, Cys-235, and His-241. A coiled-coil region spans residues 271 to 302; that stretch reads ESQVKSQISELNLLMKETECNGERAKEEALAH. A COS domain is found at 356–413; the sequence is LKETDQSCFVQTAKQLHLRIQKATESLKSFRPAAQASFEDYVVNISKQTEVLGELSFF. In terms of domain architecture, Fibronectin type-III spans 416–511; that stretch reads GIDIPEINEE…RELILHTPPA (96 aa). A B30.2/SPRY domain is found at 509–723; sequence PPAPVFSFLF…LEEAITAKYL (215 aa). Residues 606–626 form a disordered region; it reads RDAASPRYEQDSGHDSGSEDA. The span at 613-622 shows a compositional bias: basic and acidic residues; sequence YEQDSGHDSG.

It belongs to the TRIM/RBCC family. As to quaternary structure, interacts with CENPH. Expressed in testis. Strongly expressed in the neural tube region in 14.5 dpc embryos.

It localises to the cytoplasm. Its subcellular location is the cytoplasmic vesicle. The protein resides in the secretory vesicle. The protein localises to the acrosome. It is found in the cytoskeleton. It carries out the reaction S-ubiquitinyl-[E2 ubiquitin-conjugating enzyme]-L-cysteine + [acceptor protein]-L-lysine = [E2 ubiquitin-conjugating enzyme]-L-cysteine + N(6)-ubiquitinyl-[acceptor protein]-L-lysine.. E3 ubiquitin-protein ligase which mediates ubiquitination and subsequent proteasomal degradation of target proteins. Involved in chromosome segregation and cell cycle regulation. May play a role in the acrosome reaction and fertilization. This Mus musculus (Mouse) protein is E3 ubiquitin-protein ligase Trim36 (Trim36).